A 618-amino-acid polypeptide reads, in one-letter code: UvrABC system protein C (618 aa).

In terms of domain architecture, GIY-YIG spans 20 to 98 (TAPGVYRMYA…IKSLSPRYNV (79 aa)). The UVR domain maps to 207–242 (DQLGEEIMQSMQQASEALEFERAARLRDLLSSLRSM).

This sequence belongs to the UvrC family. As to quaternary structure, interacts with UvrB in an incision complex.

The protein localises to the cytoplasm. The UvrABC repair system catalyzes the recognition and processing of DNA lesions. UvrC both incises the 5' and 3' sides of the lesion. The N-terminal half is responsible for the 3' incision and the C-terminal half is responsible for the 5' incision. The chain is UvrABC system protein C from Xanthomonas oryzae pv. oryzae (strain MAFF 311018).